The chain runs to 382 residues: 1-deoxy-D-xylulose 5-phosphate reductoisomerase (382 aa).

Residues T10, G11, S12, I13, N38, and N120 each coordinate NADPH. Position 121 (K121) interacts with 1-deoxy-D-xylulose 5-phosphate. Residue E122 participates in NADPH binding. D146 provides a ligand contact to Mn(2+). 1-deoxy-D-xylulose 5-phosphate-binding residues include S147, E148, S172, and H195. Residue E148 participates in Mn(2+) binding. G201 contacts NADPH. 1-deoxy-D-xylulose 5-phosphate-binding residues include S208, N213, K214, and E217. Residue E217 participates in Mn(2+) binding.

Belongs to the DXR family. Mg(2+) serves as cofactor. Requires Mn(2+) as cofactor.

The catalysed reaction is 2-C-methyl-D-erythritol 4-phosphate + NADP(+) = 1-deoxy-D-xylulose 5-phosphate + NADPH + H(+). It functions in the pathway isoprenoid biosynthesis; isopentenyl diphosphate biosynthesis via DXP pathway; isopentenyl diphosphate from 1-deoxy-D-xylulose 5-phosphate: step 1/6. Its function is as follows. Catalyzes the NADPH-dependent rearrangement and reduction of 1-deoxy-D-xylulose-5-phosphate (DXP) to 2-C-methyl-D-erythritol 4-phosphate (MEP). The polypeptide is 1-deoxy-D-xylulose 5-phosphate reductoisomerase (Thermoanaerobacter sp. (strain X514)).